Reading from the N-terminus, the 102-residue chain is NADH-quinone oxidoreductase subunit K (102 aa).

3 consecutive transmembrane segments (helical) span residues 6–26, 30–50, and 62–82; these read LEHG…GLMV, ILFV…AFIV, and VMFI…LAIL.

This sequence belongs to the complex I subunit 4L family. As to quaternary structure, NDH-1 is composed of 13 different subunits. Subunits NuoA, H, J, K, L, M, N constitute the membrane sector of the complex.

The protein localises to the cell inner membrane. The enzyme catalyses a quinone + NADH + 5 H(+)(in) = a quinol + NAD(+) + 4 H(+)(out). In terms of biological role, NDH-1 shuttles electrons from NADH, via FMN and iron-sulfur (Fe-S) centers, to quinones in the respiratory chain. The immediate electron acceptor for the enzyme in this species is believed to be ubiquinone. Couples the redox reaction to proton translocation (for every two electrons transferred, four hydrogen ions are translocated across the cytoplasmic membrane), and thus conserves the redox energy in a proton gradient. In Pseudomonas putida (strain W619), this protein is NADH-quinone oxidoreductase subunit K.